The primary structure comprises 1067 residues: Ubiquitin carboxyl-terminal hydrolase 26 (1067 aa).

Positions 1–12 (MSRPNTRNKNKR) are enriched in basic residues. A disordered region spans residues 1 to 22 (MSRPNTRNKNKRQRPDAVDSSS). A USP domain is found at 106 to 442 (AGLTNLGATC…DAYMLMYSLR (337 aa)). The Nucleophile role is filled by Cys-115. His-359 acts as the Proton acceptor in catalysis. Residues 385-418 (KRPCNEASSSTPQSESNGTASSGNITDGIQSGSS) are disordered. Positions 390-418 (EASSSTPQSESNGTASSGNITDGIQSGSS) are enriched in polar residues. 3 DUSP domains span residues 503 to 595 (NALT…GDYC), 610 to 711 (DSYR…DCTC), and 738 to 861 (TLKV…SAFI). The 84-residue stretch at 948–1031 (FEVDRRTSKR…LWVRDTEMHE (84 aa)) folds into the Ubiquitin-like domain.

It belongs to the peptidase C19 family. In terms of tissue distribution, expressed in seedlings, roots, stems, leaves and inflorescences.

The protein localises to the nucleus. The enzyme catalyses Thiol-dependent hydrolysis of ester, thioester, amide, peptide and isopeptide bonds formed by the C-terminal Gly of ubiquitin (a 76-residue protein attached to proteins as an intracellular targeting signal).. Its function is as follows. Recognizes and hydrolyzes the peptide bond at the C-terminal Gly of ubiquitin. Involved in the processing of poly-ubiquitin precursors as well as that of ubiquitinated proteins. Deubiquitinates H2BK143ub1 of histone H2B. The chain is Ubiquitin carboxyl-terminal hydrolase 26 (UBP26) from Arabidopsis thaliana (Mouse-ear cress).